The following is a 542-amino-acid chain: TNF receptor-associated factor 6 (542 aa).

The interval 1 to 374 (MSLLHCENSC…EAQQCNGIYI (374 aa)) is interaction with TAX1BP1. The RING-type; degenerate zinc finger occupies 71–110 (CPICLMALREAVQTPCGHRFCKACIIKSIRDAGHKCPVDN). K125 participates in a covalent cross-link: Glycyl lysine isopeptide (Lys-Gly) (interchain with G-Cter in SUMO); alternate. A Glycyl lysine isopeptide (Lys-Gly) (interchain with G-Cter in ubiquitin); alternate cross-link involves residue K125. K143 is covalently cross-linked (Glycyl lysine isopeptide (Lys-Gly) (interchain with G-Cter in SUMO)). TRAF-type zinc fingers lie at residues 151-203 (EHQA…EDKE) and 204-260 (IHEQ…NHLA). Positions 310–368 (SEVHNFQETIQQLEGRLVRQDHQIRELTAKMETQSMYVNELKRTIRTLEDKVAEIEAQQ) form a coiled coil. Residue K339 forms a Glycyl lysine isopeptide (Lys-Gly) (interchain with G-Cter in ubiquitin) linkage. The MATH domain occupies 370–519 (NGIYIWKIGN…DDTLLVRCEV (150 aa)). Residues 375 to 542 (WKIGNFGMHL…FQPRSTDSGI (168 aa)) form an interaction with TANK region. A Glycyl lysine isopeptide (Lys-Gly) (interchain with G-Cter in SUMO) cross-link involves residue K473.

This sequence belongs to the TNF receptor-associated factor family. A subfamily. As to quaternary structure, homotrimer. Homooligomer. N-terminal region is dimeric while C-terminal region is trimeric; maybe providing a mode of oligomerization. Upon IL1B treatment, forms a complex with PELI1, IRAK1, IRAK4 and MYD88; this complex recruits MAP3K7/TAK1, TAB1 and TAB2 to mediate NF-kappa-B activation. Direct binding of SMAD6 to PELI1 prevents the complex formation and hence negatively regulates IL1R-TLR signaling and eventually NF-kappa-B-mediated gene expression. Binds to TNFRSF5/CD40 and TNFRSF11A/RANK. Associates with NGFR, TNFRSF17, IRAK2, IRAK3, RIPK2, MAP3K1, MAP3K5, MAP3K14, CSK, TRAF, TRAF-interacting protein TRIP and TNF receptor associated protein TDP2. Interacts with IL17R. Interacts with SQSTM1 bridging NTRK1 and NGFR. Forms a ternary complex with SQSTM1 and PRKCZ. Interacts with PELI2 and PELI3. Binds UBE2V1. Interacts with TAX1BP1; this interaction mediates deubiquitination of TRAF6 and inhibition of NF-kappa-B activation. Interacts with ZNF675. Interacts with ARRB1 and ARRB2. Interacts with MAP3K7 and TAB1/MAP3K7IP1; during IL-1 signaling. Interacts with UBE2N. Interacts with TGFBR1, HDAC1 and RANGAP1. Interacts with AKT1, AKT2 and AKT3. Interacts (via TRAF domains) with NUMBL (via C-terminal). Interacts with RBCK1. Interacts with LIMD1 (via LIM domains). Interacts with RSAD2/viperin. Interacts (via C-terminus) with EIF2AK2/PKR (via the kinase catalytic domain). Interacts with ZFAND5. Interacts with IL1RL1. Interacts with TRAFD1. Interacts with AJUBA. Interacts with MAVS/IPS1. Interacts (via TRAF domains) with DYNC2I2 (via WD domains). Interacts with IFIT3 (via N-terminus). Interacts with TICAM2. Interacts with CARD14. Interacts with CD40 and MAP3K8; the interaction is required for ERK activation. Interacts with TICAM1 and this interaction is enhanced in the presence of WDFY1. Interacts with TANK; this interaction increases in response to DNA damage. Interacts with USP10; this interaction increases in response to DNA damage. Interacts with ZC3H12A; this interaction increases in response to DNA damage and is stimulated by TANK. Interacts with WDFY3. Interacts with TRIM13. Interacts with GPS2. Interacts (via C-terminus) with SASH1. Interacts with LRRC19. Interacts with IL17RA and TRAF3IP2. Interacts with TOMM70. Interacts with AMBRA1; interaction is required to mediate 'Lys-63'-linked ubiquitination of ULK1. Interacts with CRBN; this interaction inhibits TLR4-mediated signaling by preventing TRAF6-mediated ubiquitination of ECSIT. Post-translationally, sumoylated on Lys-125, Lys-143 and Lys-473 with SUMO1. In terms of processing, polyubiquitinated on Lys-125 by TRAF3IP2; after cell stimulation with IL17A. Polyubiquitinated on Lys-125; after cell stimulation with IL1B or TGFB. This ligand-induced cell stimulation leads to dimerization/oligomerization of TRAF6 molecules, followed by auto-ubiquitination which involves UBE2N and UBE2V1 and leads to TRAF6 activation. This 'Lys-63' site-specific poly-ubiquitination appears to be associated with the activation of signaling molecules. Endogenous autoubiquitination occurs only for the cytoplasmic form. Deubiquitinated by USP10 in a TANK-dependent manner, leading to the negative regulation of NF-kappa-B signaling upon DNA damage. LRRC19 induces 'Lys-63' ubiquitination. Ubiquitinated at Lys-339 by the SCF(FBXL2) complex, leading to its degradation by the proteasome.

The protein resides in the cytoplasm. The protein localises to the cell cortex. Its subcellular location is the nucleus. It localises to the lipid droplet. It carries out the reaction S-ubiquitinyl-[E2 ubiquitin-conjugating enzyme]-L-cysteine + [acceptor protein]-L-lysine = [E2 ubiquitin-conjugating enzyme]-L-cysteine + N(6)-ubiquitinyl-[acceptor protein]-L-lysine.. Its pathway is protein modification; protein ubiquitination. In terms of biological role, E3 ubiquitin ligase that, together with UBE2N and UBE2V1, mediates the synthesis of 'Lys-63'-linked-polyubiquitin chains conjugated to proteins, such as ECSIT, IKBKG, IRAK1, AKT1 and AKT2. Also mediates ubiquitination of free/unanchored polyubiquitin chain that leads to MAP3K7 activation. Leads to the activation of NF-kappa-B and JUN. Seems to also play a role in dendritic cells (DCs) maturation and/or activation. Represses c-Myb-mediated transactivation, in B-lymphocytes. Adapter protein that seems to play a role in signal transduction initiated via TNF receptor, IL-1 receptor and IL-17 receptor. Regulates osteoclast differentiation by mediating the activation of adapter protein complex 1 (AP-1) and NF-kappa-B, in response to RANK-L stimulation. Together with MAP3K8, mediates CD40 signals that activate ERK in B-cells and macrophages, and thus may play a role in the regulation of immunoglobulin production. Acts as a regulator of the JNK and NF-kappa-B signaling pathways by initiating assembly of heterotypic 'Lys-63'-/'Lys-48'-linked branched ubiquitin chains that are then recognized by TAB2: TRAF6 catalyzes initial 'Lys-63'-linked-polyubiquitin chains that are then branched via 'Lys-48'-linked polyubiquitin by HUWE1. 'Lys-63'-/'Lys-48'-linked branched ubiquitin chains protect 'Lys-63'-linkages from CYLD deubiquitination. Also participates in the TCR signaling by ubiquitinating LAT. This is TNF receptor-associated factor 6 (TRAF6) from Bos taurus (Bovine).